We begin with the raw amino-acid sequence, 287 residues long: Syntaxin-11 (287 aa).

Residues 41–71 (LESLYRDIRDIQDENQLLVADVKRLGKQNAR) adopt a coiled-coil conformation. Residues 204 to 266 (LNEIESRHRE…GQAKAQVRKA (63 aa)) form the t-SNARE coiled-coil homology domain.

The protein belongs to the syntaxin family. As to quaternary structure, interacts with the SNARE proteins SNAP-23 and VAMP.

Its subcellular location is the membrane. The protein localises to the golgi apparatus. It localises to the trans-Golgi network membrane. Functionally, SNARE that acts to regulate protein transport between late endosomes and the trans-Golgi network. In Homo sapiens (Human), this protein is Syntaxin-11 (STX11).